We begin with the raw amino-acid sequence, 529 residues long: MQDFWHAASAQLESELTPQQFKTWIKPLTPLSFDEQACTLRIAAPNRFKLDWVKSQFSGRIQSLACDYWEATVDVQFVLDPSAGQRQAALQPALAPVPMQPLGAQAGQPRQAMPAGNGVSHDAATLRPAPSVYRETALATASHAAADIDVPVMDAAEVSARSYRMPPQAPAVVATLAAPPQAHVDDSVHERSRLNQILTFDNFVTGKANQLARAAAIQVANNPGKSYNPLYLYGGVGLGKTHLIHAIGNFMLMENPRARIRYIHAEQYVSDVVKAYQRKAFDDFKRYYHSLDLLLIDDIQFFSGKNRTQEEFFYAFEALIANRAQVIITSDTYPKEITGIDDRLISRFDSGLTVAIEPPELEMRVAILMKKAQAENVTVPEEVAFFVAKHLRSNVRELEGALRKILAYSNFHGKEITIEVTREALKDLLTVQNRQISVENIQKTCADFYNIKVADMYSKKRPANIARPRQIAMYLAKELTQKSLPEIGELFGGRDHTTVLHAVRKIADERTKDAQLNHELHVLEQTLKG.

The segment at 1 to 72 is domain I, interacts with DnaA modulators; the sequence is MQDFWHAASA…SLACDYWEAT (72 aa). A domain II region spans residues 72–192; sequence TVDVQFVLDP…HVDDSVHERS (121 aa). Residues 193–409 are domain III, AAA+ region; that stretch reads RLNQILTFDN…GALRKILAYS (217 aa). Gly237, Gly239, Lys240, and Thr241 together coordinate ATP. Residues 410–529 are domain IV, binds dsDNA; that stretch reads NFHGKEITIE…LHVLEQTLKG (120 aa).

The protein belongs to the DnaA family. In terms of assembly, oligomerizes as a right-handed, spiral filament on DNA at oriC.

The protein localises to the cytoplasm. Plays an essential role in the initiation and regulation of chromosomal replication. ATP-DnaA binds to the origin of replication (oriC) to initiate formation of the DNA replication initiation complex once per cell cycle. Binds the DnaA box (a 9 base pair repeat at the origin) and separates the double-stranded (ds)DNA. Forms a right-handed helical filament on oriC DNA; dsDNA binds to the exterior of the filament while single-stranded (ss)DNA is stabiized in the filament's interior. The ATP-DnaA-oriC complex binds and stabilizes one strand of the AT-rich DNA unwinding element (DUE), permitting loading of DNA polymerase. After initiation quickly degrades to an ADP-DnaA complex that is not apt for DNA replication. Binds acidic phospholipids. This is Chromosomal replication initiator protein DnaA from Ralstonia pickettii (strain 12J).